A 309-amino-acid chain; its full sequence is Mitochondrial glycine transporter (309 aa).

3 Solcar repeats span residues 2–94 (SNVG…LRAL), 124–207 (LTSQ…IKHE), and 219–304 (QATL…GLML). The next 6 helical transmembrane spans lie at 8–33 (LLSG…TRLQ), 69–95 (GTTP…RALM), 130–155 (LIAG…ARFE), 182–205 (GFLA…EGIK), 223–249 (IHGL…KTKI), and 279–297 (GASL…GWAV).

Belongs to the mitochondrial carrier (TC 2.A.29) family. SLC25A38 subfamily.

Its subcellular location is the mitochondrion inner membrane. It catalyses the reaction glycine(in) = glycine(out). Mitochondrial glycine transporter that imports glycine into the mitochondrial matrix. Plays an important role in providing glycine for the first enzymatic step in heme biosynthesis, the condensation of glycine with succinyl-CoA to produce 5-aminolevulinate (ALA) in the mitochondrial matrix. The polypeptide is Mitochondrial glycine transporter (Laccaria bicolor (strain S238N-H82 / ATCC MYA-4686) (Bicoloured deceiver)).